The following is a 776-amino-acid chain: E3 ubiquitin-protein ligase UHRF1 (776 aa).

Residues Met-1–Ala-78 form the Ubiquitin-like domain. The interval Ala-88–Thr-126 is disordered. Positions Ser-93 to Ser-102 are enriched in polar residues. Residues Glu-103–Ser-113 are compositionally biased toward basic and acidic residues. The span at Asp-114–Thr-126 shows a compositional bias: polar residues. 2 tudor-like regions span residues Gly-135–Arg-201 and Gln-208–Pro-277. Residues Gly-278–Pro-298 are disordered. Residues Pro-290–Glu-299 are linker. The segment at Gly-297–Asp-364 adopts a PHD-type zinc-finger fold. Histone H3R2me0 binding regions lie at residues Cys-331–Asp-335 and Pro-351–Asp-353. The 164-residue stretch at Gly-417–Arg-580 folds into the YDG domain. The required to promote base flipping stretch occupies residues His-443 to Val-444. DNA is bound by residues Ala-461–Gly-462 and Asp-467. Required for formation of a 5-methylcytosine-binding pocket regions lie at residues Tyr-464–Asp-467 and Tyr-476–Ser-479. Residues Glu-617–Val-660 form a disordered region. The residue at position 649 (Ser-649) is a Phosphoserine; by CDK2. The segment at Cys-706–Arg-745 adopts an RING-type zinc-finger fold.

Phosphorylation at Ser-649 is required for gastrulation. In terms of tissue distribution, expressed in proliferating tissues. Highly expressed 24-48 hours after fertilization (hpf) in rapidly proliferating tissues, including the tectum, retina and brachial arches. Preferentially expressed in the liver bud and expression is maintained in the fully developed liver. Also expressed in the proximal gut. In adult, the highest expression is detected in testis.

Its subcellular location is the nucleus. It localises to the cytoplasm. The enzyme catalyses S-ubiquitinyl-[E2 ubiquitin-conjugating enzyme]-L-cysteine + [acceptor protein]-L-lysine = [E2 ubiquitin-conjugating enzyme]-L-cysteine + N(6)-ubiquitinyl-[acceptor protein]-L-lysine.. Its pathway is protein modification; protein ubiquitination. Its function is as follows. Multidomain protein that acts as a key epigenetic regulator by bridging DNA methylation and chromatin modification. Specifically recognizes and binds hemimethylated DNA at replication forks via its YDG domain and recruits dnmt1 methyltransferase to ensure faithful propagation of the DNA methylation patterns through DNA replication. In addition to its role in maintenance of DNA methylation, also plays a key role in chromatin modification: through its tudor-like regions and PHD-type zinc fingers, specifically recognizes and binds histone H3 trimethylated at 'Lys-9' (H3K9me3) and unmethylated at 'Arg-2' (H3R2me0), respectively, and recruits chromatin proteins. Enriched in pericentric heterochromatin where it recruits different chromatin modifiers required for this chromatin replication. Also localizes to euchromatic regions where it negatively regulates transcription possibly by impacting DNA methylation and histone modifications. Has E3 ubiquitin-protein ligase activity by mediating the ubiquitination of target proteins. However, it is still unclear how E3 ubiquitin-protein ligase activity is related to its role in chromatin in vivo. Required for pregastrula and lens development. The protein is E3 ubiquitin-protein ligase UHRF1 (uhrf1) of Danio rerio (Zebrafish).